A 325-amino-acid chain; its full sequence is Eukaryotic translation initiation factor 3 subunit I (325 aa).

WD repeat units follow at residues 8 to 47 (GHER…RLGT), 50 to 91 (GHTG…ALLK), 144 to 183 (CNDS…VLVN), and 186 to 225 (EHSR…HQKT). Position 219 is a phosphothreonine (Thr219). Position 264 is an N6-acetyllysine (Lys264). Lys282 participates in a covalent cross-link: Glycyl lysine isopeptide (Lys-Gly) (interchain with G-Cter in ubiquitin). Residues 283–324 (GHFGLINSVAFHPDGKSYSSGGEDGYVRIHYFDPQYFEFEFE) form a WD 5 repeat. Residue Tyr308 is modified to Phosphotyrosine.

Belongs to the eIF-3 subunit I family. As to quaternary structure, component of the eukaryotic translation initiation factor 3 (eIF-3) complex, which is composed of 13 subunits: EIF3A, EIF3B, EIF3C, EIF3D, EIF3E, EIF3F, EIF3G, EIF3H, EIF3I, EIF3J, EIF3K, EIF3L and EIF3M. The eIF-3 complex appears to include 3 stable modules: module A is composed of EIF3A, EIF3B, EIF3G and EIF3I; module B is composed of EIF3F, EIF3H, and EIF3M; and module C is composed of EIF3C, EIF3D, EIF3E, EIF3K and EIF3L. EIF3C of module C binds EIF3B of module A and EIF3H of module B, thereby linking the three modules. EIF3J is a labile subunit that binds to the eIF-3 complex via EIF3B. The eIF-3 complex interacts with RPS6KB1 under conditions of nutrient depletion. Mitogenic stimulation leads to binding and activation of a complex composed of MTOR and RPTOR, leading to phosphorylation and release of RPS6KB1 and binding of EIF4B to eIF-3. In terms of processing, phosphorylated by TGF-beta type II receptor.

The protein resides in the cytoplasm. Its function is as follows. Component of the eukaryotic translation initiation factor 3 (eIF-3) complex, which is required for several steps in the initiation of protein synthesis. The eIF-3 complex associates with the 40S ribosome and facilitates the recruitment of eIF-1, eIF-1A, eIF-2:GTP:methionyl-tRNAi and eIF-5 to form the 43S pre-initiation complex (43S PIC). The eIF-3 complex stimulates mRNA recruitment to the 43S PIC and scanning of the mRNA for AUG recognition. The eIF-3 complex is also required for disassembly and recycling of post-termination ribosomal complexes and subsequently prevents premature joining of the 40S and 60S ribosomal subunits prior to initiation. The eIF-3 complex specifically targets and initiates translation of a subset of mRNAs involved in cell proliferation, including cell cycling, differentiation and apoptosis, and uses different modes of RNA stem-loop binding to exert either translational activation or repression. The chain is Eukaryotic translation initiation factor 3 subunit I from Pongo abelii (Sumatran orangutan).